Here is a 347-residue protein sequence, read N- to C-terminus: Holliday junction branch migration complex subunit RuvB (347 aa).

Residues 1–181 form a large ATPase domain (RuvB-L) region; it reads MTRNSLLNPE…FGIPVRLQFY (181 aa). 9 residues coordinate ATP: leucine 20, arginine 21, glycine 62, lysine 65, threonine 66, threonine 67, arginine 171, tyrosine 181, and arginine 218. A Mg(2+)-binding site is contributed by threonine 66. The segment at 182–252 is small ATPAse domain (RuvB-S); sequence SIEELRQVIT…IADEALNRLE (71 aa). Residues 255 to 347 form a head domain (RuvB-H) region; it reads KLGLDLMDRR…SEIKNQPGLL (93 aa). 3 residues coordinate DNA: arginine 291, arginine 310, and arginine 315.

It belongs to the RuvB family. As to quaternary structure, homohexamer. Forms an RuvA(8)-RuvB(12)-Holliday junction (HJ) complex. HJ DNA is sandwiched between 2 RuvA tetramers; dsDNA enters through RuvA and exits via RuvB. An RuvB hexamer assembles on each DNA strand where it exits the tetramer. Each RuvB hexamer is contacted by two RuvA subunits (via domain III) on 2 adjacent RuvB subunits; this complex drives branch migration. In the full resolvosome a probable DNA-RuvA(4)-RuvB(12)-RuvC(2) complex forms which resolves the HJ.

The protein localises to the cytoplasm. The catalysed reaction is ATP + H2O = ADP + phosphate + H(+). Functionally, the RuvA-RuvB-RuvC complex processes Holliday junction (HJ) DNA during genetic recombination and DNA repair, while the RuvA-RuvB complex plays an important role in the rescue of blocked DNA replication forks via replication fork reversal (RFR). RuvA specifically binds to HJ cruciform DNA, conferring on it an open structure. The RuvB hexamer acts as an ATP-dependent pump, pulling dsDNA into and through the RuvAB complex. RuvB forms 2 homohexamers on either side of HJ DNA bound by 1 or 2 RuvA tetramers; 4 subunits per hexamer contact DNA at a time. Coordinated motions by a converter formed by DNA-disengaged RuvB subunits stimulates ATP hydrolysis and nucleotide exchange. Immobilization of the converter enables RuvB to convert the ATP-contained energy into a lever motion, pulling 2 nucleotides of DNA out of the RuvA tetramer per ATP hydrolyzed, thus driving DNA branch migration. The RuvB motors rotate together with the DNA substrate, which together with the progressing nucleotide cycle form the mechanistic basis for DNA recombination by continuous HJ branch migration. Branch migration allows RuvC to scan DNA until it finds its consensus sequence, where it cleaves and resolves cruciform DNA. In Zymomonas mobilis subsp. mobilis (strain ATCC 31821 / ZM4 / CP4), this protein is Holliday junction branch migration complex subunit RuvB.